Consider the following 355-residue polypeptide: Protein DVR-1 (355 aa).

The first 15 residues, methionine 1–leucine 15, serve as a signal peptide directing secretion. Positions cysteine 16 to arginine 240 are excised as a propeptide. N-linked (GlcNAc...) asparagine glycosylation is found at asparagine 108, asparagine 179, and asparagine 296. Intrachain disulfides connect cysteine 254/cysteine 320, cysteine 283/cysteine 352, and cysteine 287/cysteine 354.

It belongs to the TGF-beta family. Homodimer. Abundant in ovaries and eggs, and equally distributed among all blastomeres.

It localises to the secreted. In terms of biological role, serves to facilitate the differentiation of either mesoderm or endoderm either as a cofactor in an instructive signal or by providing permissive environment. This is Protein DVR-1 (dvr1) from Danio rerio (Zebrafish).